Here is a 218-residue protein sequence, read N- to C-terminus: Fucoxanthin-chlorophyll a-c binding protein, chloroplastic (218 aa).

Residues 1–36 (MFYSAAVAALMVGSASAFLAPAQFNSVAKSSGALSM) constitute a chloroplast transit peptide.

It belongs to the fucoxanthin chlorophyll protein family. As to quaternary structure, the LHC complex of chromophytic algae is composed of fucoxanthin, chlorophyll A and C bound non-covalently by fucoxanthin chlorophyll proteins (FCPs). The ratio of pigments in this LHC is; fucoxanthin: chlorophyll C: chlorophyll A; (0.6-1): (0.1-0.3): (1).

The protein localises to the plastid. Its subcellular location is the chloroplast thylakoid membrane. Functionally, the light-harvesting complex (LHC) functions as a light receptor, it captures and delivers excitation energy to photosystems with which it is closely associated. Energy is transferred from the carotenoid and chlorophyll C (or B) to chlorophyll A and the photosynthetic reaction centers where it is used to synthesize ATP and reducing power. The protein is Fucoxanthin-chlorophyll a-c binding protein, chloroplastic of Chattonella marina var. antiqua (Red tide flagellate).